Consider the following 353-residue polypeptide: Photosystem II D2 protein (353 aa).

An N-acetylthreonine modification is found at Thr-2. Thr-2 carries the phosphothreonine modification. The chain crosses the membrane as a helical span at residues 41–61 (CAYFALGGWLTGTTFVTSWYT). His-118 provides a ligand contact to chlorophyll a. The chain crosses the membrane as a helical span at residues 125–141 (GFMLRQFEIARSVQLRP). Gln-130 and Asn-143 together coordinate pheophytin a. Residues 153 to 166 (VFVSVFLIYPLGQS) form a helical membrane-spanning segment. His-198 serves as a coordination point for chlorophyll a. The chain crosses the membrane as a helical span at residues 208 to 228 (AALLCAIHGATVENTIFEDGD). Residues His-215 and Phe-262 each coordinate a plastoquinone. Position 215 (His-215) interacts with Fe cation. Residue His-269 participates in Fe cation binding. A helical membrane pass occupies residues 279-295 (GLWMSAVGVVGLAVNLR).

It belongs to the reaction center PufL/M/PsbA/D family. In terms of assembly, PSII is composed of 1 copy each of membrane proteins PsbA, PsbB, PsbC, PsbD, PsbE, PsbF, PsbH, PsbI, PsbJ, PsbK, PsbL, PsbM, PsbT, PsbX, PsbY, PsbZ, Psb30/Ycf12, at least 3 peripheral proteins of the oxygen-evolving complex and a large number of cofactors. It forms dimeric complexes. The cofactor is The D1/D2 heterodimer binds P680, chlorophylls that are the primary electron donor of PSII, and subsequent electron acceptors. It shares a non-heme iron and each subunit binds pheophytin, quinone, additional chlorophylls, carotenoids and lipids. There is also a Cl(-1) ion associated with D1 and D2, which is required for oxygen evolution. The PSII complex binds additional chlorophylls, carotenoids and specific lipids..

Its subcellular location is the plastid. The protein resides in the chloroplast thylakoid membrane. The enzyme catalyses 2 a plastoquinone + 4 hnu + 2 H2O = 2 a plastoquinol + O2. Photosystem II (PSII) is a light-driven water:plastoquinone oxidoreductase that uses light energy to abstract electrons from H(2)O, generating O(2) and a proton gradient subsequently used for ATP formation. It consists of a core antenna complex that captures photons, and an electron transfer chain that converts photonic excitation into a charge separation. The D1/D2 (PsbA/PsbD) reaction center heterodimer binds P680, the primary electron donor of PSII as well as several subsequent electron acceptors. D2 is needed for assembly of a stable PSII complex. In Chaetosphaeridium globosum (Charophycean green alga), this protein is Photosystem II D2 protein.